The primary structure comprises 249 residues: MEWYWIGLLIVVVLFLLSAVRIVKEYERGVIFRLGRLVGARGPGLFFIIPILENMVVVDLRTVTYDVPSQEVVTKDNVTVKVNAVVYYRVVDPAKAVTEVFDYQYATAQLAQTTLRSIIGQAELDEVLSERDKLNVKLQQIIDEETNPWGIKVTAVEIKDVELPEEMRRIMAMQAEAERERRSKIIRAEGEYQAAMKLREAADVLAQSEGAILLRYLQTLNEISAEQNTTIVMPIPVELLKFFVEKAKS.

The helical transmembrane segment at 3 to 23 threads the bilayer; the sequence is WYWIGLLIVVVLFLLSAVRIV.

Belongs to the band 7/mec-2 family.

It is found in the membrane. This is an uncharacterized protein from Archaeoglobus fulgidus (strain ATCC 49558 / DSM 4304 / JCM 9628 / NBRC 100126 / VC-16).